Reading from the N-terminus, the 65-residue chain is Beta-defensin 41 (65 aa).

Positions 1–19 (MKFHLFFFILLFGATILTA) are cleaved as a signal peptide. Cystine bridges form between Cys-35–Cys-63, Cys-42–Cys-56, and Cys-46–Cys-64.

It belongs to the beta-defensin family. In terms of tissue distribution, isoform 2 is epididymis-specific and expressed mainly in the proximal caput.

It localises to the secreted. Has bactericidal activity. In terms of biological role, isoform 2 may play a role in the antimicrobial protection of sperm and urogenital tract epithelia. The chain is Beta-defensin 41 from Mus musculus (Mouse).